Consider the following 207-residue polypeptide: Glutathione S-transferase 4 (207 aa).

The GST N-terminal domain occupies 2–79 (PNYKLLYFDA…YLARKFGLAG (78 aa)). Residues tyrosine 8, tryptophan 39, lysine 43, 49–51 (GQL), and 63–64 (QS) contribute to the glutathione site. A GST C-terminal domain is found at 81 to 207 (TAEEEAYADS…YVATRKDSIV (127 aa)).

Belongs to the GST superfamily. Sigma family.

It carries out the reaction RX + glutathione = an S-substituted glutathione + a halide anion + H(+). Functionally, conjugation of reduced glutathione to a wide number of exogenous and endogenous hydrophobic electrophiles. May play a role in the detoxification of reactive oxygen species produced during pathogenic bacterial infection. The polypeptide is Glutathione S-transferase 4 (Caenorhabditis elegans).